The following is a 178-amino-acid chain: Ribonuclease M5 (178 aa).

A Toprim domain is found at 10-103; it reads DGVIVCEGKT…NSTKIGVAEA (94 aa). Mg(2+)-binding residues include Glu16, Asp62, and Asp64.

This sequence belongs to the ribonuclease M5 family. Mg(2+) is required as a cofactor.

It is found in the cytoplasm. The enzyme catalyses Endonucleolytic cleavage of RNA, removing 21 and 42 nucleotides, respectively, from the 5'- and 3'-termini of a 5S-rRNA precursor.. In terms of biological role, required for correct processing of both the 5' and 3' ends of 5S rRNA precursor. Cleaves both sides of a double-stranded region yielding mature 5S rRNA in one step. This is Ribonuclease M5 from Mycoplasma pneumoniae (strain ATCC 29342 / M129 / Subtype 1) (Mycoplasmoides pneumoniae).